The following is a 323-amino-acid chain: NADH-ubiquinone oxidoreductase chain 1 (323 aa).

Transmembrane regions (helical) follow at residues 8-28 (VINP…LTLL), 74-94 (FLFL…WAPM), 105-125 (LGVL…LGSG), 145-165 (ISYE…TGGF), 176-196 (SIWL…STLA), 236-256 (ILLM…IPAF), 258-278 (ELTA…FLWV), and 298-318 (FLPL…ALAG).

The protein belongs to the complex I subunit 1 family.

It is found in the mitochondrion inner membrane. It carries out the reaction a ubiquinone + NADH + 5 H(+)(in) = a ubiquinol + NAD(+) + 4 H(+)(out). Its function is as follows. Core subunit of the mitochondrial membrane respiratory chain NADH dehydrogenase (Complex I) that is believed to belong to the minimal assembly required for catalysis. Complex I functions in the transfer of electrons from NADH to the respiratory chain. The immediate electron acceptor for the enzyme is believed to be ubiquinone. The chain is NADH-ubiquinone oxidoreductase chain 1 (MT-ND1) from Oncorhynchus mykiss (Rainbow trout).